We begin with the raw amino-acid sequence, 340 residues long: 4-hydroxy-3-methylbut-2-enyl diphosphate reductase (340 aa).

Cys18 is a [4Fe-4S] cluster binding site. (2E)-4-hydroxy-3-methylbut-2-enyl diphosphate contacts are provided by His47 and His83. 2 residues coordinate dimethylallyl diphosphate: His47 and His83. Residues His47 and His83 each coordinate isopentenyl diphosphate. Position 105 (Cys105) interacts with [4Fe-4S] cluster. (2E)-4-hydroxy-3-methylbut-2-enyl diphosphate is bound at residue His133. Residue His133 coordinates dimethylallyl diphosphate. Residue His133 coordinates isopentenyl diphosphate. The active-site Proton donor is the Glu135. Thr174 contacts (2E)-4-hydroxy-3-methylbut-2-enyl diphosphate. Residue Cys204 participates in [4Fe-4S] cluster binding. (2E)-4-hydroxy-3-methylbut-2-enyl diphosphate-binding residues include Ser232, Ser233, Asn234, and Ser277. Ser232, Ser233, Asn234, and Ser277 together coordinate dimethylallyl diphosphate. The isopentenyl diphosphate site is built by Ser232, Ser233, Asn234, and Ser277.

Belongs to the IspH family. Requires [4Fe-4S] cluster as cofactor.

It carries out the reaction isopentenyl diphosphate + 2 oxidized [2Fe-2S]-[ferredoxin] + H2O = (2E)-4-hydroxy-3-methylbut-2-enyl diphosphate + 2 reduced [2Fe-2S]-[ferredoxin] + 2 H(+). It catalyses the reaction dimethylallyl diphosphate + 2 oxidized [2Fe-2S]-[ferredoxin] + H2O = (2E)-4-hydroxy-3-methylbut-2-enyl diphosphate + 2 reduced [2Fe-2S]-[ferredoxin] + 2 H(+). It participates in isoprenoid biosynthesis; dimethylallyl diphosphate biosynthesis; dimethylallyl diphosphate from (2E)-4-hydroxy-3-methylbutenyl diphosphate: step 1/1. It functions in the pathway isoprenoid biosynthesis; isopentenyl diphosphate biosynthesis via DXP pathway; isopentenyl diphosphate from 1-deoxy-D-xylulose 5-phosphate: step 6/6. In terms of biological role, catalyzes the conversion of 1-hydroxy-2-methyl-2-(E)-butenyl 4-diphosphate (HMBPP) into a mixture of isopentenyl diphosphate (IPP) and dimethylallyl diphosphate (DMAPP). Acts in the terminal step of the DOXP/MEP pathway for isoprenoid precursor biosynthesis. In Bartonella quintana (strain Toulouse) (Rochalimaea quintana), this protein is 4-hydroxy-3-methylbut-2-enyl diphosphate reductase.